We begin with the raw amino-acid sequence, 153 residues long: Protein C (153 aa).

Residues 16-42 (SSETLTLLSNQEPLSMQDPPLVRSSTR) form a disordered region. Residues 18–29 (ETLTLLSNQEPL) show a composition bias toward polar residues.

This Tupaia paramyxovirus (TPMV) protein is Protein C (P/V/C).